A 238-amino-acid chain; its full sequence is ATP synthase subunit a (238 aa).

6 consecutive transmembrane segments (helical) span residues 18–38 (TTNL…VFAL), 76–96 (FGLY…IGLF), 114–134 (PIVT…SGVA), 150–170 (FKVW…TLGL), 188–208 (GIAF…ALIW), and 211–231 (FSVF…SVYI).

Belongs to the ATPase A chain family. As to quaternary structure, F-type ATPases have 2 components, CF(1) - the catalytic core - and CF(0) - the membrane proton channel. CF(1) has five subunits: alpha(3), beta(3), gamma(1), delta(1), epsilon(1). CF(0) has three main subunits: a(1), b(2) and c(9-12). The alpha and beta chains form an alternating ring which encloses part of the gamma chain. CF(1) is attached to CF(0) by a central stalk formed by the gamma and epsilon chains, while a peripheral stalk is formed by the delta and b chains.

Its subcellular location is the cell membrane. Its function is as follows. Key component of the proton channel; it plays a direct role in the translocation of protons across the membrane. This chain is ATP synthase subunit a, found in Pediococcus pentosaceus (strain ATCC 25745 / CCUG 21536 / LMG 10740 / 183-1w).